Here is a 101-residue protein sequence, read N- to C-terminus: Small ribosomal subunit protein uS14 (101 aa).

The protein belongs to the universal ribosomal protein uS14 family. In terms of assembly, part of the 30S ribosomal subunit. Contacts proteins S3 and S10.

Binds 16S rRNA, required for the assembly of 30S particles and may also be responsible for determining the conformation of the 16S rRNA at the A site. This Chromobacterium violaceum (strain ATCC 12472 / DSM 30191 / JCM 1249 / CCUG 213 / NBRC 12614 / NCIMB 9131 / NCTC 9757 / MK) protein is Small ribosomal subunit protein uS14.